We begin with the raw amino-acid sequence, 239 residues long: Ribitol-5-phosphate cytidylyltransferase (239 aa).

Residues 7-10 and 80-86 each bind CTP; these read FAGG and GETGQMS.

This sequence belongs to the IspD/TarI cytidylyltransferase family. TarI subfamily.

The enzyme catalyses D-ribitol 5-phosphate + CTP + H(+) = CDP-L-ribitol + diphosphate. The protein operates within cell wall biogenesis; poly(ribitol phosphate) teichoic acid biosynthesis. Its function is as follows. Catalyzes the transfer of the cytidylyl group of CTP to D-ribitol 5-phosphate. The sequence is that of Ribitol-5-phosphate cytidylyltransferase from Streptococcus agalactiae serotype III (strain NEM316).